Here is a 421-residue protein sequence, read N- to C-terminus: Testin (421 aa).

The 108-residue stretch at 92-199 (MILTNPVAAK…GDVKLPREMD (108 aa)) folds into the PET domain. The interval 133-164 (EKQPVAGSEGAQYRKKQLAKQLPAHDQDPSKC) is disordered. The segment covering 155 to 164 (PAHDQDPSKC) has biased composition (basic and acidic residues). LIM zinc-binding domains are found at residues 234 to 297 (YSCY…CDSE), 299 to 359 (PRCA…NHAV), and 362 to 421 (QGCH…KMMS).

It belongs to the prickle / espinas / testin family. Interacts via LIM domain 1 with ZYX. Interacts (via LIM domain 3) with ENAH and VASP. Interacts with ALKBH4, talin, actin, alpha-actinin, GRIP1 and PXN. Interacts (via LIM domain 2) with ACTL7A (via N-terminus). Heterodimer with ACTL7A; the heterodimer interacts with ENAH to form a heterotrimer.

The protein resides in the cytoplasm. Its subcellular location is the cell junction. It is found in the focal adhesion. Its function is as follows. Scaffold protein that may play a role in cell adhesion, cell spreading and in the reorganization of the actin cytoskeleton. Plays a role in the regulation of cell proliferation. May act as a tumor suppressor. The polypeptide is Testin (TES) (Canis lupus familiaris (Dog)).